The primary structure comprises 584 residues: Poly(A) RNA polymerase protein 2 (584 aa).

Residues M1–S11 show a composition bias toward polar residues. Disordered stretches follow at residues M1–D63 and E81–E147. The segment covering K12–Q35 has biased composition (basic residues). Residues N53–D63 show a composition bias toward basic and acidic residues. A compositionally biased stretch (acidic residues) spans S130–E139. 2 residues coordinate Mg(2+): D236 and D238. Residues G301, K326, N431, and R435 each coordinate ATP. Residues N371 to N431 enclose the PAP-associated domain. The tract at residues T525 to L584 is disordered. The span at A547 to S562 shows a compositional bias: basic and acidic residues.

Belongs to the DNA polymerase type-B-like family. As to quaternary structure, component of the TRAMP complex (also called TRF4 complex) composed of at least HUL4, MTR4, PAP2/TRF4 and either AIR1 or AIR2. Interacts with NOP53 and POL2. Interacts directly with AIR2. The cofactor is Mg(2+). Requires Mn(2+) as cofactor.

It localises to the nucleus. The enzyme catalyses RNA(n) + ATP = RNA(n)-3'-adenine ribonucleotide + diphosphate. Catalytic subunit of the TRAMP complex which has a poly(A) RNA polymerase activity and is involved in a post-transcriptional quality control mechanism limiting inappropriate expression of genetic information. Polyadenylation is required for the degradative activity of the exosome on several of its nuclear RNA substrates like cryptic transcripts generated by RNA polymerase II and III, or hypomethylated pre-tRNAi-Met. Polyadenylates RNA processing and degradation intermediates of snRNAs, snoRNAs and mRNAs that accumulate in strains lacking a functional exosome. TRF4 is also required for proper nuclear division in mitosis, DNA damage repair and sister chromatid cohesion. Involved in the regulation of histone mRNA levels. May mediate mitotic chromosome condensation. The protein is Poly(A) RNA polymerase protein 2 (PAP2) of Saccharomyces cerevisiae (strain ATCC 204508 / S288c) (Baker's yeast).